Consider the following 265-residue polypeptide: Transcription factor LBX1b (265 aa).

A DNA-binding region (homeobox) is located at residues 121-180; it reads RRKSRTAFTNHQLYELEKRFLHQKYLSPADRDQIAHQLGLTNAQVITWFQNRRAKLKRDL.

It localises to the nucleus. Functionally, transcription factor required for the development of hypaxial muscles. The chain is Transcription factor LBX1b from Danio rerio (Zebrafish).